The sequence spans 150 residues: Putative pre-16S rRNA nuclease (150 aa).

This sequence belongs to the YqgF nuclease family.

It is found in the cytoplasm. Its function is as follows. Could be a nuclease involved in processing of the 5'-end of pre-16S rRNA. This is Putative pre-16S rRNA nuclease from Chlamydia abortus (strain DSM 27085 / S26/3) (Chlamydophila abortus).